A 286-amino-acid chain; its full sequence is Aminoglycoside N(3)-acetyltransferase VIII (286 aa).

This sequence belongs to the antibiotic N-acetyltransferase family.

It catalyses the reaction a 2-deoxystreptamine antibiotic + acetyl-CoA = an N(3)-acetyl-2-deoxystreptamine antibiotic + CoA + H(+). Functionally, resistance to neomycin. This chain is Aminoglycoside N(3)-acetyltransferase VIII (aacC8), found in Streptomyces fradiae (Streptomyces roseoflavus).